Consider the following 516-residue polypeptide: Cytochrome P450 monooxygenase lcsI (516 aa).

Residues 20–42 (ICVAAGCAFALSLLYLYVRALYL) form a helical membrane-spanning segment. N-linked (GlcNAc...) asparagine glycans are attached at residues Asn-131, Asn-184, Asn-415, Asn-420, and Asn-442. Cys-456 is a binding site for heme.

Belongs to the cytochrome P450 family. Heme is required as a cofactor.

It localises to the membrane. It functions in the pathway secondary metabolite biosynthesis. In terms of biological role, cytochrome P450 monooxygenase; part of the gene cluster that mediates the biosynthesis of the lipopeptide antibiotics leucinostatins that show extensive biological activities, including antimalarial, antiviral, antibacterial, antifungal, and antitumor activities, as well as phytotoxic. Leucinostatin A contains nine amino acid residues, including the unusual amino acid 4-methyl-L-proline (MePro), 2-amino-6-hydroxy-4-methyl-8-oxodecanoic acid (AHyMeOA), 3-hydroxyleucine (HyLeu), alpha-aminoisobutyric acid (AIB), beta-Ala, a 4-methylhex-2-enoic acid at the N-terminus as well as a N1,N1-dimethylpropane-1,2-diamine (DPD) at the C-terminus. The biosynthesis of leucinostatins is probably initiated with the assembly of 4-methylhex-2-enoic acid by a reducing PKS. Two reducing polyketide synthases, lcsB and lcsC, have been identified in the cluster and it is not clear which is the one that assembles 4-methylhex-2-enoic acid since both contain KS, AT, DH, cMT, ER, KR and ACP domains. The polyketide residue might be transferred to the NRPS lcsA, mediated by two additional enzymes, the acyl-CoA ligase lcsD and the thioesterase lcsE. The linear polyketide carboxylic acid, which is released from PKS, is converted to a CoA thioester by lcsD, and then lcsE hydrolyzes the thiol bond and shuttles the polyketide intermediate to lcsA. The C domain of the first module catalyzed the condensation of 4-methylhex-2-enoic acid and MePro carried by domain A1, followed by successive condensations of nine amino acids to trigger the elongation of the linear peptide. A5 and A6 domains of lcsA are proposed to incorporate leucine, A2 AHyMeOA, and A3 incorporates HyLeu. A4, A7 and A8 incorporate AIB. The AHyMeOA in leucinostatin A activated by the A2 might be produced by the second PKS (lcsB or lcsC) present within the cluster. The MePro is probably produced via leucine cyclization and may originate from a separate pathway, independent of the cluster. Another nonproteinogenic amino acid, beta-Ala, could be produced by an aspartic acid decarboxylase also localized outside of the cluster. Two candidates are VFPBJ_01400 and VFPBJ_10476. The final peptide scaffold may be released by the NAD(P)H-dependent thioester reductase (TE) at the C-terminal region of lcsA. Transamination of the lcsA product by the transaminase lcsP may produce DPD at the C-terminus. Further hydroxylation steps performed alternatively by the cytochrome P450 monooxygenases lcsI, lcsK and lcsN then yield the non-methylated leucinostatins precursor. It is also possible that leucines can be hydroxylated prior to their incorporation into the peptide. Varying extents of methylation then lead to the formation of leucinostatins A and B. The sequence is that of Cytochrome P450 monooxygenase lcsI from Purpureocillium lilacinum (Paecilomyces lilacinus).